We begin with the raw amino-acid sequence, 635 residues long: Threonine--tRNA ligase (635 aa).

Residues 1–61 (MINISFPDGS…ENDCKLRILT (61 aa)) form the TGS domain. The interval 242-533 (DHRKLGKELD…LIEEYAGCFP (292 aa)) is catalytic. Zn(2+)-binding residues include cysteine 333, histidine 384, and histidine 510.

It belongs to the class-II aminoacyl-tRNA synthetase family. As to quaternary structure, homodimer. Zn(2+) serves as cofactor.

The protein resides in the cytoplasm. The catalysed reaction is tRNA(Thr) + L-threonine + ATP = L-threonyl-tRNA(Thr) + AMP + diphosphate + H(+). Its function is as follows. Catalyzes the attachment of threonine to tRNA(Thr) in a two-step reaction: L-threonine is first activated by ATP to form Thr-AMP and then transferred to the acceptor end of tRNA(Thr). Also edits incorrectly charged L-seryl-tRNA(Thr). This is Threonine--tRNA ligase from Rickettsia akari (strain Hartford).